The following is a 970-amino-acid chain: Serine/threonine-protein kinase PLK4 (970 aa).

Positions 12 to 265 constitute a Protein kinase domain; it reads FKVGNLLGKG…LSSVLDHPFM (254 aa). ATP contacts are provided by residues 18–26 and K41; that span reads LGKGSFAGV. N6-acetyllysine is present on residues K45 and K46. The active-site Proton acceptor is D136. Disordered stretches follow at residues 323 to 458 and 497 to 538; these read TVFP…NHLC and SISP…HSVK. The span at 328 to 356 shows a compositional bias: polar residues; it reads NKSSTDFSSSGDGNSFYTQWGNQETSNSG. The segment covering 360-369 has biased composition (basic and acidic residues); sequence VIQDAEERPH. The segment covering 379-393 has biased composition (polar residues); sequence SDRSGTSNSQSQAKT. S401 is modified (phosphoserine). Over residues 438 to 454 the composition is skewed to polar residues; sequence SSSSGSFERPDNNQALS. Residues 504-515 show a composition bias toward basic and acidic residues; the sequence is FQGHPDLQKDTS. Positions 586-699 constitute a Cryptic POLO box 1 (CPB1) domain; sequence TLRSITSPLV…SRFVQLVRSK (114 aa). Position 665 is a phosphoserine (S665). In terms of domain architecture, Cryptic POLO box 2 (CPB2) spans 700-813; the sequence is SPKITYFTRY…GRKPGSTSSP (114 aa). A disordered region spans residues 808–828; the sequence is GSTSSPKALSPPPSVDSNYPT. A Phosphoserine modification is found at S817. The region spanning 886-964 is the POLO box domain; the sequence is QLLKSVFVKN…LSSILLMFSN (79 aa).

It belongs to the protein kinase superfamily. Ser/Thr protein kinase family. CDC5/Polo subfamily. As to quaternary structure, homodimer. Interacts with CEP152 (via N-terminus). Interacts with CEP78; this interaction may be important for proper PLK4 localization to the centriole and PLK4-induced overduplication of centrioles. Interacts with CEP131. Interacts simultaneously with TENT5C and CEP192. Interacts with TENT5C; this interaction leads to the TENT5C recruitment in the centrosome. Interacts with CEP85; this interaction may be important in cell migration and centriole assembly. Acetylation by KAT2A and KAT2B impairs kinase activity by shifting the kinase to an inactive conformation. Post-translationally, ubiquitinated; leading to its degradation by the proteasome. Deubiquitinated by USP54; leading to PLK4 stabilization. In terms of processing, tyrosine-phosphorylated by TEC.

It localises to the cytoplasm. The protein localises to the cytoskeleton. It is found in the microtubule organizing center. Its subcellular location is the centrosome. The protein resides in the centriole. It localises to the nucleus. The protein localises to the nucleolus. It is found in the cleavage furrow. The catalysed reaction is L-seryl-[protein] + ATP = O-phospho-L-seryl-[protein] + ADP + H(+). It catalyses the reaction L-threonyl-[protein] + ATP = O-phospho-L-threonyl-[protein] + ADP + H(+). Its function is as follows. Serine/threonine-protein kinase that plays a central role in centriole duplication. Able to trigger procentriole formation on the surface of the parental centriole cylinder, leading to the recruitment of centriole biogenesis proteins such as SASS6, CPAP, CCP110, CEP135 and gamma-tubulin. When overexpressed, it is able to induce centrosome amplification through the simultaneous generation of multiple procentrioles adjoining each parental centriole during S phase. Phosphorylates 'Ser-151' of FBXW5 during the G1/S transition, leading to inhibit FBXW5 ability to ubiquitinate SASS6. Its central role in centriole replication suggests a possible role in tumorigenesis, centrosome aberrations being frequently observed in tumors. Also involved in deuterosome-mediated centriole amplification in multiciliated that can generate more than 100 centrioles. Also involved in trophoblast differentiation by phosphorylating HAND1, leading to disrupt the interaction between HAND1 and MDFIC and activate HAND1. Phosphorylates CDC25C and CHEK2. Required for the recruitment of STIL to the centriole and for STIL-mediated centriole amplification. Phosphorylates CEP131 at 'Ser-78' and PCM1 at 'Ser-372' which is essential for proper organization and integrity of centriolar satellites. This Homo sapiens (Human) protein is Serine/threonine-protein kinase PLK4.